Here is a 447-residue protein sequence, read N- to C-terminus: Glucose-6-phosphate isomerase (447 aa).

The Proton donor role is filled by glutamate 289. Residues histidine 310 and lysine 424 contribute to the active site.

Belongs to the GPI family.

It is found in the cytoplasm. It carries out the reaction alpha-D-glucose 6-phosphate = beta-D-fructose 6-phosphate. It functions in the pathway carbohydrate biosynthesis; gluconeogenesis. Its pathway is carbohydrate degradation; glycolysis; D-glyceraldehyde 3-phosphate and glycerone phosphate from D-glucose: step 2/4. Functionally, catalyzes the reversible isomerization of glucose-6-phosphate to fructose-6-phosphate. The chain is Glucose-6-phosphate isomerase from Parabacteroides distasonis (strain ATCC 8503 / DSM 20701 / CIP 104284 / JCM 5825 / NCTC 11152).